The primary structure comprises 241 residues: MNNNITKKIILSTTLLLLGTASTQFPNTPINSSSEAKAYYINQNETNVNELTKYYSQKYLTFSNSTLWQKDNGTIHATLLQFSWYSHIQVYGPESWGNINQLRNKSVDIFGIKDQETIDSFALSQETFTGGVTPAATSNDKHYKLNVTYKDKAETFTGGFPVYEGNKPVLTLKELDFRIRQTLIKSKKLYNNSYNKGQIKITGADNNYTIDLSKRLPSTDANRYVKKPQNAKIEVILEKSN.

A signal peptide spans 1-26 (MNNNITKKIILSTTLLLLGTASTQFP).

The protein belongs to the staphylococcal/streptococcal toxin family. Interacts with host FPR2; this interaction promotes neutrophil chemotaxis.

In terms of biological role, acts as a pathogen alarming molecule by acting on host neutrophil chemotactic factors FPR2. Plays a role of chemoattractant and induces degranulation and oxidative burst in neutrophils. The chain is Superantigen-like protein 13 from Staphylococcus aureus (strain Newman).